Consider the following 220-residue polypeptide: Large ribosomal subunit protein eL15 (220 aa).

A compositionally biased stretch (basic and acidic residues) spans 197–207 (KKRHEASRGAR). Residues 197–220 (KKRHEASRGARDPWQIAEKLKEEK) are disordered.

This sequence belongs to the eukaryotic ribosomal protein eL15 family.

In Desulfurococcus amylolyticus (strain DSM 18924 / JCM 16383 / VKM B-2413 / 1221n) (Desulfurococcus kamchatkensis), this protein is Large ribosomal subunit protein eL15.